We begin with the raw amino-acid sequence, 268 residues long: uncharacterized protein (268 aa).

This is an uncharacterized protein from Methanocaldococcus jannaschii (strain ATCC 43067 / DSM 2661 / JAL-1 / JCM 10045 / NBRC 100440) (Methanococcus jannaschii).